The following is a 490-amino-acid chain: MQPAMMMFSSKYWARRGFSLDSAVPEEHQLLGNLTLNKANSGKNDDKGNKGSSKNETATESGKTAVVFSLKNEVGGLVKALRLFQEKRVHMVHIESRKSRRRSSEVEIFVDCECGKTEFNELIQLLKFQTTIVTLNPPENIWTEEEELEDVPWFPRKISELDKCSHRVLMYGSELDADHPGFKDNVYRQRRKYFVDVAMGYKYGQPIPRVEYTEEETKTWGVVFRELSKLYPTHACREYLKNFPLLTKYCGYREDNVPQLEDVSMFLKERSGFTVRPVAGYLSPRDFLAGLAYRVFHCTQYIRHGSDPLYTPEPDTCHELLGHVPLLADPKFAQFSQEIGLASLGASDEDVQKLATCYFFTIEFGLCKQEGQLRAYGAGLLSSIGELKHALSDKACVKAFDPKTTCLQECLITTFQEAYFVSESFEEAKEKMRDFAKSITRPFSVYFNPYTQSIEILKDTRSIENVVQDLRSDLNTVCDALNKMNQYLGI.

S19 carries the post-translational modification Phosphoserine. Residues 34–62 (LTLNKANSGKNDDKGNKGSSKNETATESG) form a disordered region. Polar residues predominate over residues 50–62 (KGSSKNETATESG). An ACT domain is found at 65-140 (AVVFSLKNEV…TIVTLNPPEN (76 aa)). Residues H318, H323, and E363 each coordinate Fe cation.

This sequence belongs to the biopterin-dependent aromatic amino acid hydroxylase family. As to quaternary structure, interacts with DNAJC12. It depends on Fe(2+) as a cofactor.

It catalyses the reaction (6R)-L-erythro-5,6,7,8-tetrahydrobiopterin + L-tryptophan + O2 = 5-hydroxy-L-tryptophan + (4aS,6R)-4a-hydroxy-L-erythro-5,6,7,8-tetrahydrobiopterin. It functions in the pathway aromatic compound metabolism; serotonin biosynthesis; serotonin from L-tryptophan: step 1/2. This is Tryptophan 5-hydroxylase 2 (TPH2) from Macaca mulatta (Rhesus macaque).